Consider the following 159-residue polypeptide: MQQGWLSNWLVKHKVVHRSLGFDHRGIETLQIKAGDWDSIAVILYVYGYNYLRSQCAYDVAPGGSLASVYHLTRIQYGIDNPEEVCIKVFAQKDNPRIPSVFWIWRSADFQERESYDMVGISYDNHPRLKRILMPESWVGWPLRKDYITPNFYEIQDAH.

It belongs to the complex I 30 kDa subunit family. NDH is composed of at least 16 different subunits, 5 of which are encoded in the nucleus.

The protein resides in the plastid. It localises to the chloroplast thylakoid membrane. The catalysed reaction is a plastoquinone + NADH + (n+1) H(+)(in) = a plastoquinol + NAD(+) + n H(+)(out). It catalyses the reaction a plastoquinone + NADPH + (n+1) H(+)(in) = a plastoquinol + NADP(+) + n H(+)(out). Its function is as follows. NDH shuttles electrons from NAD(P)H:plastoquinone, via FMN and iron-sulfur (Fe-S) centers, to quinones in the photosynthetic chain and possibly in a chloroplast respiratory chain. The immediate electron acceptor for the enzyme in this species is believed to be plastoquinone. Couples the redox reaction to proton translocation, and thus conserves the redox energy in a proton gradient. The sequence is that of NAD(P)H-quinone oxidoreductase subunit J, chloroplastic from Brachypodium distachyon (Purple false brome).